A 358-amino-acid polypeptide reads, in one-letter code: MSVQNVVLFDTQPLTLMLGGKLSHINVAYQTYGTLNAEKNNAVLICHALTGDAEPYFDDGRDGWWQNFMGAGLALDTDRYFFISSNVLGGCKGTTGPSSINPQTGKPYGSQFPNIVVQDIVKVQKALLDHLGISHLKAIIGGSFGGMQANQWAIDYPDFMDNIVNLCSSIYFSAEAIGFNHVMRQAVINDPNFNGGDYYEGTPPDQGLSIARMLGMLTYRTDLQLAKAFGRATKSDGSFWGDYFQVESYLSYQGKKFLERFDANSYLHLLRALDMYDPSLGYDNVKEALSRIKARYTLVSVTTDQLFKPIDLYKSKQLLEQSGVDLHFYEFPSDYGHDAFLVDYDQFEKRIRDGLAGN.

The 303-residue stretch at 41 to 343 (NAVLICHALT…DYGHDAFLVD (303 aa)) folds into the AB hydrolase-1 domain. The active-site Nucleophile is serine 143. Residue arginine 212 coordinates substrate. Residues aspartate 304 and histidine 337 contribute to the active site. Aspartate 338 contacts substrate.

In terms of assembly, homodimer.

Its subcellular location is the cytoplasm. It carries out the reaction L-homoserine + acetyl-CoA = O-acetyl-L-homoserine + CoA. Its pathway is amino-acid biosynthesis; L-methionine biosynthesis via de novo pathway; O-acetyl-L-homoserine from L-homoserine: step 1/1. Functionally, transfers an acetyl group from acetyl-CoA to L-homoserine, forming acetyl-L-homoserine. Utilizes a ping-pong kinetic mechanism in which the acetyl group of acetyl-CoA is initially transferred to the enzyme to form an acetyl-enzyme intermediate before subsequent transfer to homoserine to form the final product, O-acetylhomoserine. The polypeptide is Homoserine O-acetyltransferase (Haemophilus influenzae (strain ATCC 51907 / DSM 11121 / KW20 / Rd)).